A 1009-amino-acid polypeptide reads, in one-letter code: Membrane alanyl aminopeptidase (1009 aa).

Positions 1 to 15 (MAAIKLLVLSLACAC) are cleaved as a signal peptide. Residues 16–52 (VIAHSPIPPASRTIFLDERLEGGAFENIDAFENIELS) constitute a propeptide, activation peptide. 338–342 (GAMEN) is a substrate binding site. His374 serves as a coordination point for Zn(2+). Glu375 (proton acceptor) is an active-site residue. 2 residues coordinate Zn(2+): His378 and Glu397. An N-linked (GlcNAc...) asparagine glycan is attached at Asn906. Residues 955–980 (PSTSTTSTTAAPTTVTQPTITEPSTP) form a disordered region. Residue Asp987 is the site of GPI-anchor amidated aspartate attachment. A propeptide spans 988–1009 (SAMTSFASLFIISLGAILHLIL) (removed in mature form).

This sequence belongs to the peptidase M1 family. The cofactor is Zn(2+).

The protein localises to the cell membrane. Functionally, binds to the B.thuringiensis toxin, CryIA(C). The sequence is that of Membrane alanyl aminopeptidase from Heliothis virescens (Tobacco budworm moth).